Consider the following 325-residue polypeptide: Histone-lysine N-methyltransferase ATXR4 (325 aa).

The signal sequence occupies residues 1 to 30 (MSRLALNRYSRCFSRLKTLTTPLFFSSSAA). The SET domain occupies 42-295 (PPIRVGLTES…EGEELRICYI (254 aa)).

It belongs to the class V-like SAM-binding methyltransferase superfamily. Histone-lysine methyltransferase family. TRX/MLL subfamily.

It is found in the nucleus. The enzyme catalyses L-lysyl-[histone] + S-adenosyl-L-methionine = N(6)-methyl-L-lysyl-[histone] + S-adenosyl-L-homocysteine + H(+). In terms of biological role, histone methyltransferase. The sequence is that of Histone-lysine N-methyltransferase ATXR4 (ATXR4) from Arabidopsis thaliana (Mouse-ear cress).